We begin with the raw amino-acid sequence, 523 residues long: Ubiquitin carboxyl-terminal hydrolase 22-B (523 aa).

A UBP-type zinc finger spans residues 4–121 (AGCSHVNSFK…KEEQRKAWKL (118 aa)). Positions 6, 8, 46, 49, 59, 62, 67, 72, 76, 82, 95, and 98 each coordinate Zn(2+). Positions 174-518 (RGLINLGNTC…EGYLLFYHKQ (345 aa)) constitute a USP domain. The Nucleophile role is filled by C183. Catalysis depends on H477, which acts as the Proton acceptor.

This sequence belongs to the peptidase C19 family. UBP8 subfamily. Component of some SAGA transcription coactivator-HAT complexes.

Its subcellular location is the nucleus. The catalysed reaction is Thiol-dependent hydrolysis of ester, thioester, amide, peptide and isopeptide bonds formed by the C-terminal Gly of ubiquitin (a 76-residue protein attached to proteins as an intracellular targeting signal).. Its function is as follows. Histone deubiquitinating component of the transcription regulatory histone acetylation (HAT) complex SAGA. Catalyzes the deubiquitination of both histones H2A and H2B, thereby acting as a coactivator. Recruited to specific gene promoters by activators, where it is required for transcription. In Xenopus laevis (African clawed frog), this protein is Ubiquitin carboxyl-terminal hydrolase 22-B (usp22-b).